A 712-amino-acid polypeptide reads, in one-letter code: Saccharolysin (712 aa).

A Phosphoserine modification is found at serine 73. Histidine 501 serves as a coordination point for Zn(2+). Residue glutamate 502 is part of the active site. Positions 505 and 508 each coordinate Zn(2+).

This sequence belongs to the peptidase M3 family. It depends on Zn(2+) as a cofactor.

The protein resides in the cytoplasm. It carries out the reaction Cleavage of Pro-|-Phe and Ala-|-Ala bonds.. In terms of biological role, could be involved in late stage of protein degradation. The protein is Saccharolysin (PRD1) of Saccharomyces cerevisiae (strain ATCC 204508 / S288c) (Baker's yeast).